Reading from the N-terminus, the 256-residue chain is Fructose-1,6-bisphosphatase/inositol-1-monophosphatase (256 aa).

4 residues coordinate Mg(2+): Glu-65, Asp-79, Ile-81, and Asp-82. Residues 82–84, Arg-172, Ala-177, and Arg-196 contribute to the substrate site; that span reads DGT. Asp-201 provides a ligand contact to Mg(2+).

This sequence belongs to the inositol monophosphatase superfamily. FBPase class 4 family. In terms of assembly, homotetramer. Requires Mg(2+) as cofactor.

It carries out the reaction beta-D-fructose 1,6-bisphosphate + H2O = beta-D-fructose 6-phosphate + phosphate. It catalyses the reaction a myo-inositol phosphate + H2O = myo-inositol + phosphate. Its activity is regulated as follows. In contrast to mammalian I-1-P phosphatases, is only weakly inhibited by Li(+), since 50% inhibitory concentration for Li(+) is about 100 mM, and the Li(+) concentration required to totally abolish I-1-Pase activity is 1 M. Functionally, phosphatase with broad specificity; it can dephosphorylate fructose 1,6-bisphosphate, both D and L isomers of inositol-1-phosphate (I-1-P) but displaying a 20-fold higher rate of hydrolysis of D-I-1-P than of the L isomer, 2'-AMP, pNPP, inositol-2-phosphate, beta-glycerol phosphate, and alpha-D-glucose-1-phosphate. Cannot hydrolyze glucose-6-phosphate, fructose-6-phosphate, 5'-AMP and NAD(+). May be involved in the biosynthesis of a unique osmolyte, di-myo-inositol 1,1-phosphate. The chain is Fructose-1,6-bisphosphatase/inositol-1-monophosphatase (suhB) from Thermotoga maritima (strain ATCC 43589 / DSM 3109 / JCM 10099 / NBRC 100826 / MSB8).